A 386-amino-acid chain; its full sequence is Demethylsterigmatocystin 6-O-methyltransferase (386 aa).

A substrate-binding site is contributed by 137 to 150 (FDISGPCTQILPDF). The substrate binding stretch occupies residues 177–197 (MFEWMPQHPKHMESLGHLMAL). Residues 228–229 (GG), D253, 273–274 (NF), and R289 each bind S-adenosyl-L-methionine. Catalysis depends on H293, which acts as the Proton acceptor.

This sequence belongs to the class I-like SAM-binding methyltransferase superfamily. Cation-independent O-methyltransferase family. COMT subfamily.

It carries out the reaction 6-demethylsterigmatocystin + S-adenosyl-L-methionine = sterigmatocystin + S-adenosyl-L-homocysteine + H(+). It participates in mycotoxin biosynthesis; aflatoxin biosynthesis. Its function is as follows. Catalyzes both the conversion of demethylsterigmatocystin (DMST) to sterigmatocystin and the conversion of dihydrodemethylsterigmatocystin to dihydrosterigmatocystin (DHDMST) during aflatoxin biosynthesis. In Aspergillus flavus (strain ATCC 200026 / FGSC A1120 / IAM 13836 / NRRL 3357 / JCM 12722 / SRRC 167), this protein is Demethylsterigmatocystin 6-O-methyltransferase (omtB).